The chain runs to 207 residues: Inhibitor of hydrogen peroxide resistance (207 aa).

Positions 163-182 (MNYIHQRTRISRSVVAEVLA) form a DNA-binding region, H-T-H motif.

The protein belongs to the IprA family.

Involved in oxidative stress resistance. The protein is Inhibitor of hydrogen peroxide resistance of Escherichia coli O157:H7.